We begin with the raw amino-acid sequence, 293 residues long: Elongation factor P--(R)-beta-lysine ligase homolog (293 aa).

ATP contacts are provided by residues 86–88, 223–224, and Gly-272; these read RNN and EL.

Belongs to the class-II aminoacyl-tRNA synthetase family. EpmA subfamily. In terms of assembly, homodimer.

This chain is Elongation factor P--(R)-beta-lysine ligase homolog (genX), found in Aquifex aeolicus (strain VF5).